Consider the following 425-residue polypeptide: Serine hydroxymethyltransferase (425 aa).

(6S)-5,6,7,8-tetrahydrofolate contacts are provided by residues Leu-126 and 130–132; that span reads GHL. Lys-234 carries the N6-(pyridoxal phosphate)lysine modification.

Belongs to the SHMT family. Homodimer. It depends on pyridoxal 5'-phosphate as a cofactor.

The protein localises to the cytoplasm. It carries out the reaction (6R)-5,10-methylene-5,6,7,8-tetrahydrofolate + glycine + H2O = (6S)-5,6,7,8-tetrahydrofolate + L-serine. Its pathway is one-carbon metabolism; tetrahydrofolate interconversion. It functions in the pathway amino-acid biosynthesis; glycine biosynthesis; glycine from L-serine: step 1/1. Functionally, catalyzes the reversible interconversion of serine and glycine with tetrahydrofolate (THF) serving as the one-carbon carrier. This reaction serves as the major source of one-carbon groups required for the biosynthesis of purines, thymidylate, methionine, and other important biomolecules. Also exhibits THF-independent aldolase activity toward beta-hydroxyamino acids, producing glycine and aldehydes, via a retro-aldol mechanism. In Desulfotalea psychrophila (strain LSv54 / DSM 12343), this protein is Serine hydroxymethyltransferase.